The primary structure comprises 204 residues: Large ribosomal subunit protein eL15 (204 aa).

The protein belongs to the eukaryotic ribosomal protein eL15 family. Component of the large ribosomal subunit.

It localises to the cytoplasm. Its function is as follows. Component of the large ribosomal subunit. The ribosome is a large ribonucleoprotein complex responsible for the synthesis of proteins in the cell. The polypeptide is Large ribosomal subunit protein eL15 (rpl15) (Monopterus albus (Swamp eel)).